A 382-amino-acid chain; its full sequence is Carbamoyl phosphate synthase small chain (382 aa).

Residues 1 to 189 form a CPSase region; the sequence is MIKSALLVLE…ELPAAKNESE (189 aa). L-glutamine contacts are provided by Ser47, Gly241, and Gly243. Residues 193 to 380 enclose the Glutamine amidotransferase type-1 domain; it reads HVVAYDYGVK…IDLIQTYRSS (188 aa). Catalysis depends on Cys269, which acts as the Nucleophile. L-glutamine contacts are provided by Leu270, Gln273, Asn311, Gly313, and Phe314. Catalysis depends on residues His353 and Glu355.

The protein belongs to the CarA family. Composed of two chains; the small (or glutamine) chain promotes the hydrolysis of glutamine to ammonia, which is used by the large (or ammonia) chain to synthesize carbamoyl phosphate. Tetramer of heterodimers (alpha,beta)4.

The catalysed reaction is hydrogencarbonate + L-glutamine + 2 ATP + H2O = carbamoyl phosphate + L-glutamate + 2 ADP + phosphate + 2 H(+). It carries out the reaction L-glutamine + H2O = L-glutamate + NH4(+). Its pathway is amino-acid biosynthesis; L-arginine biosynthesis; carbamoyl phosphate from bicarbonate: step 1/1. It functions in the pathway pyrimidine metabolism; UMP biosynthesis via de novo pathway; (S)-dihydroorotate from bicarbonate: step 1/3. Small subunit of the glutamine-dependent carbamoyl phosphate synthetase (CPSase). CPSase catalyzes the formation of carbamoyl phosphate from the ammonia moiety of glutamine, carbonate, and phosphate donated by ATP, constituting the first step of 2 biosynthetic pathways, one leading to arginine and/or urea and the other to pyrimidine nucleotides. The small subunit (glutamine amidotransferase) binds and cleaves glutamine to supply the large subunit with the substrate ammonia. This is Carbamoyl phosphate synthase small chain from Pectobacterium atrosepticum (strain SCRI 1043 / ATCC BAA-672) (Erwinia carotovora subsp. atroseptica).